Consider the following 583-residue polypeptide: Septin-9 (583 aa).

N-acetylmethionine is present on Met1. Polar residues predominate over residues 1–14 (MKKSYSGVTRTSSG). The interval 1–49 (MKKSYSGVTRTSSGRLRRLADPTGPALKRSFEVEEIEPPNSTPPRRVQT) is disordered. The residue at position 30 (Ser30) is a Phosphoserine. Thr42 and Thr49 each carry phosphothreonine. Residue Lys62 is modified to N6-acetyllysine. Residues 79–105 (DSLSQRSPKPSLRRVELAGAKAPEPMS) are disordered. Phosphoserine is present on residues Ser82, Ser85, and Ser89. Thr143 is modified (phosphothreonine). The tract at residues 166–252 (VETPASKIPE…TPSCVGDMAD (87 aa)) is disordered. Over residues 204–221 (LPSQTLENSEAPMSQLQS) the composition is skewed to polar residues. Tyr276 carries the post-translational modification Phosphotyrosine. Positions 293-565 (QGFEFNIMVV…EAYRVKRLNE (273 aa)) constitute a Septin-type G domain. A G1 motif region spans residues 303-310 (GQSGLGKS). 303-310 (GQSGLGKS) lines the GTP pocket. Ser325 and Ser330 each carry phosphoserine. GTP contacts are provided by residues Thr337, Gly363, 443–451 (KADTLTLEE), Gly499, and Arg514. Residues 360-363 (DTPG) are G3 motif. Residues 442-445 (AKAD) are G4 motif.

It belongs to the TRAFAC class TrmE-Era-EngA-EngB-Septin-like GTPase superfamily. Septin GTPase family. As to quaternary structure, septins polymerize into heterooligomeric protein complexes that form filaments, and associate with cellular membranes, actin filaments, and microtubules. GTPase activity is required for filament formation. Interacts with SEPTIN2, SEPTIN6, SEPTIN7, SEPTIN11 and SEPTIN14. Interacts with RTKN and ARHGEF18. In terms of tissue distribution, expressed in all tissues examined except muscle. Isoforms are differentially expressed in testes, kidney, liver, heart, spleen and brain.

The protein resides in the cytoplasm. It localises to the cytoskeleton. Its function is as follows. Filament-forming cytoskeletal GTPase. May play a role in cytokinesis (Potential). The polypeptide is Septin-9 (Mus musculus (Mouse)).